A 610-amino-acid polypeptide reads, in one-letter code: UvrABC system protein C (610 aa).

Residues Ser-16–Val-94 form the GIY-YIG domain. The UVR domain maps to Asp-204–Val-239.

It belongs to the UvrC family. As to quaternary structure, interacts with UvrB in an incision complex.

It localises to the cytoplasm. The UvrABC repair system catalyzes the recognition and processing of DNA lesions. UvrC both incises the 5' and 3' sides of the lesion. The N-terminal half is responsible for the 3' incision and the C-terminal half is responsible for the 5' incision. The sequence is that of UvrABC system protein C from Shigella boydii serotype 18 (strain CDC 3083-94 / BS512).